A 190-amino-acid polypeptide reads, in one-letter code: uncharacterized protein (190 aa).

Helical transmembrane passes span 15–35 (LVMS…VLAI), 58–78 (FSSF…GVLI), 94–114 (FFSA…YFAF), and 148–168 (FLFF…SFFV).

The protein resides in the membrane. This is an uncharacterized protein from Saccharomyces cerevisiae (strain ATCC 204508 / S288c) (Baker's yeast).